A 360-amino-acid chain; its full sequence is C-C chemokine receptor type 4 (360 aa).

Residues 1-39 (MNATEVTDTTQDETVYNSYYFYESMPKPCTKEGIKAFGE) lie on the Extracellular side of the membrane. N-linked (GlcNAc...) asparagine glycosylation occurs at asparagine 2. A helical membrane pass occupies residues 40-67 (VFLPPLYSLVFLLGLFGNSVVVLVLFKY). At 68–77 (KRLKSMTDVY) the chain is on the cytoplasmic side. Residues 78–98 (LLNLAISDLLFVLSLPFWGYY) traverse the membrane as a helical segment. At 99-111 (AADQWVFGLGLCK) the chain is on the extracellular side. A disulfide bond links cysteine 110 and cysteine 187. A helical membrane pass occupies residues 112–133 (IVSWMYLVGFYSGIFFIMLMSI). Topologically, residues 134 to 150 (DRYLAIVHAVFSLKART) are cytoplasmic. The chain crosses the membrane as a helical span at residues 151–175 (LTYGVITSLITWSVAVFASLPGLLF). Residues 176–206 (STCYTEHNHTYCKTQYSVNSTTWKVLSSLEI) lie on the Extracellular side of the membrane. N-linked (GlcNAc...) asparagine glycosylation is found at asparagine 183 and asparagine 194. The helical transmembrane segment at 207–226 (NVLGLLIPLGIMLFCYSMII) threads the bilayer. Residues 227 to 242 (RTLQHCKNEKKNRAVR) lie on the Cytoplasmic side of the membrane. The chain crosses the membrane as a helical span at residues 243–267 (MIFAVVVLFLGFWTPYNVVLFLETL). The Extracellular portion of the chain corresponds to 268–284 (VELEVLQDCTLERYLDY). A helical membrane pass occupies residues 285 to 308 (AIQATETLAFIHCCLNPVIYFFLG). Topologically, residues 309-360 (EKFRKYITQLFRTCRGPLVLCKHCDFLQVYSADMSSSSYTQSTVDHDFRDAL) are cytoplasmic.

Belongs to the G-protein coupled receptor 1 family. Post-translationally, in natural killer cells, CCL22 binding induces phosphorylation on yet undefined Ser/Thr residues, most probably by beta-adrenergic receptor kinases 1 and 2. As to expression, expressed in the thymus, macrophages and T- and B-cells.

The protein localises to the cell membrane. Functionally, high affinity receptor for the C-C type chemokines CCL17/TARC and CCL22/MDC. The activity of this receptor is mediated by G(i) proteins which activate a phosphatidylinositol-calcium second messenger system. Could play a role in lipopolysaccharide (LPS)-induced endotoxic shock. In the CNS, could mediate hippocampal-neuron survival. The sequence is that of C-C chemokine receptor type 4 (Ccr4) from Mus musculus (Mouse).